Reading from the N-terminus, the 700-residue chain is Mei4-dependent protein 6 (700 aa).

Kelch repeat units follow at residues 276–322 (CIYL…MVID), 327–381 (KLYL…FDHG), 390–439 (IVYV…KIER), 452–499 (KLYI…FCQR), 508–558 (RIFT…SRFG), and 569–619 (IIYL…RFHE).

The polypeptide is Mei4-dependent protein 6 (mde6) (Schizosaccharomyces pombe (strain 972 / ATCC 24843) (Fission yeast)).